The primary structure comprises 394 residues: Glycerol-3-phosphate dehydrogenase [NAD(+)] 2 (394 aa).

Residues 41-46 (GSGNWG), lysine 152, and alanine 185 contribute to the NAD(+) site. Substrate is bound at residue lysine 152. Lysine 243 functions as the Proton acceptor in the catalytic mechanism. Residues arginine 308 and glutamine 337 each contribute to the NAD(+) site. 308–309 (RN) serves as a coordination point for substrate.

This sequence belongs to the NAD-dependent glycerol-3-phosphate dehydrogenase family.

The enzyme catalyses sn-glycerol 3-phosphate + NAD(+) = dihydroxyacetone phosphate + NADH + H(+). The protein is Glycerol-3-phosphate dehydrogenase [NAD(+)] 2 (gpd2) of Cyberlindnera jadinii (Torula yeast).